Reading from the N-terminus, the 692-residue chain is Elongation factor G (692 aa).

The tr-type G domain maps to 8–282 (EKTRNIGIMA…GVVDYLPSPV (275 aa)). GTP is bound by residues 17–24 (AHIDAGKT), 81–85 (DTPGH), and 135–138 (NKMD).

The protein belongs to the TRAFAC class translation factor GTPase superfamily. Classic translation factor GTPase family. EF-G/EF-2 subfamily.

It localises to the cytoplasm. Catalyzes the GTP-dependent ribosomal translocation step during translation elongation. During this step, the ribosome changes from the pre-translocational (PRE) to the post-translocational (POST) state as the newly formed A-site-bound peptidyl-tRNA and P-site-bound deacylated tRNA move to the P and E sites, respectively. Catalyzes the coordinated movement of the two tRNA molecules, the mRNA and conformational changes in the ribosome. The polypeptide is Elongation factor G (Geobacillus kaustophilus (strain HTA426)).